Reading from the N-terminus, the 363-residue chain is Ribosome-binding ATPase YchF (363 aa).

The region spanning F3 to M256 is the OBG-type G domain. N12 to T17 serves as a coordination point for ATP. Residues S16 and T36 each contribute to the Mg(2+) site. The TGS domain maps to N278–F361.

This sequence belongs to the TRAFAC class OBG-HflX-like GTPase superfamily. OBG GTPase family. YchF/OLA1 subfamily. It depends on Mg(2+) as a cofactor.

In terms of biological role, ATPase that binds to both the 70S ribosome and the 50S ribosomal subunit in a nucleotide-independent manner. In Escherichia coli O157:H7, this protein is Ribosome-binding ATPase YchF.